A 30-amino-acid chain; its full sequence is Putative UPF0377 protein YNR075C-A (30 aa).

The protein belongs to the UPF0377 family.

This Saccharomyces cerevisiae (strain ATCC 204508 / S288c) (Baker's yeast) protein is Putative UPF0377 protein YNR075C-A.